Here is a 140-residue protein sequence, read N- to C-terminus: Large ribosomal subunit protein bL21 (140 aa).

A disordered region spans residues 106–140 (SGVKPAVGARTKIEPAVKPAKAKKSEAEASAEDAN).

This sequence belongs to the bacterial ribosomal protein bL21 family. In terms of assembly, part of the 50S ribosomal subunit. Contacts protein L20.

This protein binds to 23S rRNA in the presence of protein L20. The chain is Large ribosomal subunit protein bL21 from Paracoccus denitrificans (strain Pd 1222).